Reading from the N-terminus, the 103-residue chain is Large ribosomal subunit protein bL21 (103 aa).

The protein belongs to the bacterial ribosomal protein bL21 family. As to quaternary structure, part of the 50S ribosomal subunit. Contacts protein L20.

This protein binds to 23S rRNA in the presence of protein L20. The protein is Large ribosomal subunit protein bL21 of Kocuria rhizophila (strain ATCC 9341 / DSM 348 / NBRC 103217 / DC2201).